A 766-amino-acid chain; its full sequence is Dolichyl pyrophosphate Glc1Man9GlcNAc2 alpha-1,3-glucosyltransferase (766 aa).

Helical transmembrane passes span leucine 6–valine 26, tyrosine 60–phenylalanine 80, isoleucine 96–alanine 116, serine 156–isoleucine 176, isoleucine 190–leucine 210, alanine 228–histidine 248, proline 324–isoleucine 344, alanine 350–valine 370, isoleucine 395–phenylalanine 415, isoleucine 423–leucine 443, valine 452–leucine 472, and leucine 482–tryptophan 502.

This sequence belongs to the ALG6/ALG8 glucosyltransferase family.

It localises to the endoplasmic reticulum membrane. It carries out the reaction an alpha-D-Glc-(1-&gt;3)-alpha-D-Man-(1-&gt;2)-alpha-D-Man-(1-&gt;2)-alpha-D-Man-(1-&gt;3)-[alpha-D-Man-(1-&gt;2)-alpha-D-Man-(1-&gt;3)-[alpha-D-Man-(1-&gt;2)-alpha-D-Man-(1-&gt;6)]-alpha-D-Man-(1-&gt;6)]-beta-D-Man-(1-&gt;4)-beta-D-GlcNAc-(1-&gt;4)-alpha-D-GlcNAc-diphospho-di-trans,poly-cis-dolichol + a di-trans,poly-cis-dolichyl beta-D-glucosyl phosphate = an alpha-D-Glc-(1-&gt;3)-alpha-D-Glc-(1-&gt;3)-alpha-D-Man-(1-&gt;2)-alpha-D-Man-(1-&gt;2)-alpha-D-Man-(1-&gt;3)-[alpha-D-Man-(1-&gt;2)-alpha-D-Man-(1-&gt;3)-[alpha-D-Man-(1-&gt;2)-alpha-D-Man-(1-&gt;6)]-alpha-D-Man-(1-&gt;6)]-beta-D-Man-(1-&gt;4)-beta-D-GlcNAc-(1-&gt;4)-alpha-D-GlcNAc-diphospho-di-trans,poly-cis-dolichol + a di-trans,poly-cis-dolichyl phosphate + H(+). The protein operates within protein modification; protein glycosylation. Its function is as follows. Dolichyl pyrophosphate Glc1Man9GlcNAc2 alpha-1,3-glucosyltransferase that operates in the biosynthetic pathway of dolichol-linked oligosaccharides, the glycan precursors employed in protein asparagine (N)-glycosylation. The assembly of dolichol-linked oligosaccharides begins on the cytosolic side of the endoplasmic reticulum membrane and finishes in its lumen. The sequential addition of sugars to dolichol pyrophosphate produces dolichol-linked oligosaccharides containing fourteen sugars, including two GlcNAcs, nine mannoses and three glucoses. Once assembled, the oligosaccharide is transferred from the lipid to nascent proteins by oligosaccharyltransferases. In the lumen of the endoplasmic reticulum, adds the second glucose residue from dolichyl phosphate glucose (Dol-P-Glc) onto the lipid-linked oligosaccharide intermediate Glc(1)Man(9)GlcNAc(2)-PP-Dol to produce Glc(2)Man(9)GlcNAc(2)-PP-Dol. This is Dolichyl pyrophosphate Glc1Man9GlcNAc2 alpha-1,3-glucosyltransferase from Caenorhabditis elegans.